A 341-amino-acid chain; its full sequence is MASCVTGTEAAIRAAACRDGEEASHLKIVAVFAIFLTSVFGVWGPVLLAKYFHGKPLYDKAILVIKCFAAGVILSTSLVHVLPEAFESLADCQVSSRHPWKDFPFAGLVTMIGAITALLVDLTASEHMGHGGGGGGDGGMEYMPVGKAVGGLEMKEGKCGADLEIQENSEEEIVKMKQRLVSQVLEIGIIFHSVIIGVTMGMSQNKCTIRPLIAALSFHQIFEGLGLGGCIAQAGFKAGTVVYMCLMFAVTTPLGIVLGMVIFAATGYDDQNPNALIMEGLLGSFSSGILIYMALVDLIALDFFHNKMLTTCGESGSRLKKLCFVALVLGSASMSLLALWA.

Residues 28-48 (IVAVFAIFLTSVFGVWGPVLL) form a helical membrane-spanning segment. At 49-61 (AKYFHGKPLYDKA) the chain is on the cytoplasmic side. The helical transmembrane segment at 62 to 82 (ILVIKCFAAGVILSTSLVHVL) threads the bilayer. Residues 83-102 (PEAFESLADCQVSSRHPWKD) are Lumenal-facing. Residues 103 to 123 (FPFAGLVTMIGAITALLVDLT) traverse the membrane as a helical segment. Residues 124–179 (ASEHMGHGGGGGGDGGMEYMPVGKAVGGLEMKEGKCGADLEIQENSEEEIVKMKQR) are Cytoplasmic-facing. The chain crosses the membrane as a helical span at residues 180-200 (LVSQVLEIGIIFHSVIIGVTM). The Lumenal portion of the chain corresponds to 201–211 (GMSQNKCTIRP). Residues 212-232 (LIAALSFHQIFEGLGLGGCIA) form a helical membrane-spanning segment. Residues 233-243 (QAGFKAGTVVY) lie on the Cytoplasmic side of the membrane. The helical transmembrane segment at 244–264 (MCLMFAVTTPLGIVLGMVIFA) threads the bilayer. The Lumenal segment spans residues 265-280 (ATGYDDQNPNALIMEG). Residues 281–301 (LLGSFSSGILIYMALVDLIAL) traverse the membrane as a helical segment. The Cytoplasmic segment spans residues 302-320 (DFFHNKMLTTCGESGSRLK). A helical transmembrane segment spans residues 321–341 (KLCFVALVLGSASMSLLALWA).

It belongs to the ZIP transporter (TC 2.A.5) family.

The protein resides in the plastid. It localises to the chloroplast thylakoid membrane. In terms of biological role, may play a role in the transport of zinc in the plastids. The protein is Zinc transporter 6, chloroplastic (ZIP6) of Arabidopsis thaliana (Mouse-ear cress).